Consider the following 362-residue polypeptide: Fructose-bisphosphate aldolase (362 aa).

D33 serves as a coordination point for dihydroxyacetone phosphate. D-glyceraldehyde 3-phosphate is bound by residues S35 and T38. R42 is a beta-D-fructose 1,6-bisphosphate binding site. K106 provides a ligand contact to D-glyceraldehyde 3-phosphate. Position 145 (K145) interacts with dihydroxyacetone phosphate. E188 is a binding site for D-glyceraldehyde 3-phosphate. E188 serves as the catalytic Proton acceptor. The dihydroxyacetone phosphate site is built by K230, S272, and G273. The active-site Schiff-base intermediate with dihydroxyacetone phosphate is the K230. Beta-D-fructose 1,6-bisphosphate contacts are provided by residues 272 to 274 (SGG) and S300. Residues G302 and R303 each coordinate dihydroxyacetone phosphate. R303 is a beta-D-fructose 1,6-bisphosphate binding site.

It belongs to the class I fructose-bisphosphate aldolase family. Homotetramer. Interacts with TRAP (via cytoplasmic domain); the interaction prevents substrate binding and thereby inhibits aldolase activity. Interacts with MTRAP (via cytoplasmic domain); MTRAP phosphorylation may increase the binding to FBPA. Interact with RH1 (via cytoplasmic domain). Interacts with RH2b (via cytoplasmic domain). Interacts with RH4 (via cytoplasmic domain). Interacts with AMA1 (via cytoplasmic domain); the interaction is weak, however it may be increased upon AMA1 phosphorylation. Interacts with EBA140 (via cytoplasmic domain); the interaction is weak. Interacts with EBA175 (via cytoplasmic domain); the interaction is weak. Interacts with EBA181 (via cytoplasmic domain); the interaction is weak. Interacts with G-actin and F-actin. May interact with ACT2/actin II; the interaction inhibits FBPA catalytic activity. Interacts with human SLC4A1/band 3 (via N-terminus); the interaction inhibits FBPA catalytic activity.

It is found in the cytoplasm. Its subcellular location is the membrane. The protein resides in the host cell membrane. It catalyses the reaction beta-D-fructose 1,6-bisphosphate = D-glyceraldehyde 3-phosphate + dihydroxyacetone phosphate. It functions in the pathway carbohydrate degradation; glycolysis; D-glyceraldehyde 3-phosphate and glycerone phosphate from D-glucose: step 4/4. Its activity is regulated as follows. The cytoplasmic tail of TRAP and probably other adhesins acts as a competitive inhibitor as the binding sites of the glycolytic substrate fructose 1,6-bisphosphate and TRAP partially overlap. Inhibited by suramin, an antiparasitic drug used to treat Trypanosome-mediated infection. Plays a key role in glycolysis by catalyzing the cleavage of fructose 1,6-bisphosphate into dihydroxyacetone phosphate and glyceraldehyde 3-phosphate. Independently of its catalytic activity, connects the actin filaments, and thus the actomyosin motor, to cell surface adhesins of the thrombospondin-related anonymous protein (TRAP), the erythrocyte binding ligand (EBL) and reticulocyte binding homolog (RH) protein families; this interaction is probably involved in transducing the motor force across the parasite surface required for sporozoite and ookinete gliding motility and merozoite invasion. Stimulates actin polymerisation. This is Fructose-bisphosphate aldolase from Plasmodium falciparum (isolate K1 / Thailand).